The following is a 126-amino-acid chain: Aspartate 1-decarboxylase (126 aa).

The active-site Schiff-base intermediate with substrate; via pyruvic acid is the Ser25. Residue Ser25 is modified to Pyruvic acid (Ser). Thr57 contacts substrate. Residue Tyr58 is the Proton donor of the active site. Substrate is bound at residue 73–75 (GAA).

It belongs to the PanD family. Heterooctamer of four alpha and four beta subunits. Pyruvate is required as a cofactor. Is synthesized initially as an inactive proenzyme, which is activated by self-cleavage at a specific serine bond to produce a beta-subunit with a hydroxyl group at its C-terminus and an alpha-subunit with a pyruvoyl group at its N-terminus.

It is found in the cytoplasm. It carries out the reaction L-aspartate + H(+) = beta-alanine + CO2. It participates in cofactor biosynthesis; (R)-pantothenate biosynthesis; beta-alanine from L-aspartate: step 1/1. Catalyzes the pyruvoyl-dependent decarboxylation of aspartate to produce beta-alanine. In Psychrobacter arcticus (strain DSM 17307 / VKM B-2377 / 273-4), this protein is Aspartate 1-decarboxylase.